We begin with the raw amino-acid sequence, 279 residues long: Oxygen-dependent coproporphyrinogen-III oxidase (279 aa).

Substrate is bound at residue S102. H106 and H116 together coordinate a divalent metal cation. The active-site Proton donor is the H116. Substrate is bound at residue 118 to 120 (NTR). Residues H149 and H179 each contribute to the a divalent metal cation site. The tract at residues 244 to 279 (YVEFNLLYDRGTKFGLMTDGNVEAILMSLPPEVKFN) is important for dimerization.

This sequence belongs to the aerobic coproporphyrinogen-III oxidase family. In terms of assembly, homodimer. A divalent metal cation is required as a cofactor.

It is found in the cytoplasm. It carries out the reaction coproporphyrinogen III + O2 + 2 H(+) = protoporphyrinogen IX + 2 CO2 + 2 H2O. The protein operates within porphyrin-containing compound metabolism; protoporphyrin-IX biosynthesis; protoporphyrinogen-IX from coproporphyrinogen-III (O2 route): step 1/1. Functionally, involved in the heme biosynthesis. Catalyzes the aerobic oxidative decarboxylation of propionate groups of rings A and B of coproporphyrinogen-III to yield the vinyl groups in protoporphyrinogen-IX. The polypeptide is Oxygen-dependent coproporphyrinogen-III oxidase (Rickettsia felis (strain ATCC VR-1525 / URRWXCal2) (Rickettsia azadi)).